Consider the following 415-residue polypeptide: ATP-dependent Clp protease ATP-binding subunit ClpX (415 aa).

The ClpX-type ZB domain maps to 1–54; it reads MARNRMGGALICSFCNKPESSERFVVPGPGGIAICDRCVDLCESYIKSYKTVRP. The Zn(2+) site is built by Cys12, Cys15, Cys35, and Cys38. 117–124 contributes to the ATP binding site; it reads PTGSGKTL.

Belongs to the ClpX chaperone family. As to quaternary structure, component of the ClpX-ClpP complex. Forms a hexameric ring that, in the presence of ATP, binds to fourteen ClpP subunits assembled into a disk-like structure with a central cavity, resembling the structure of eukaryotic proteasomes.

ATP-dependent specificity component of the Clp protease. It directs the protease to specific substrates. Can perform chaperone functions in the absence of ClpP. In Treponema denticola (strain ATCC 35405 / DSM 14222 / CIP 103919 / JCM 8153 / KCTC 15104), this protein is ATP-dependent Clp protease ATP-binding subunit ClpX.